A 113-amino-acid chain; its full sequence is Retrotransposon Gag-like protein 8C (113 aa).

It belongs to the FAM127 family.

In Homo sapiens (Human), this protein is Retrotransposon Gag-like protein 8C.